A 313-amino-acid chain; its full sequence is Dimethyladenosine transferase (313 aa).

The tract at residues 1–21 (MPKVKSGAIGRRRGRQEQRRE) is disordered. The S-adenosyl-L-methionine site is built by His-37, Leu-39, Gly-64, Glu-85, Asp-113, and Asn-128.

It belongs to the class I-like SAM-binding methyltransferase superfamily. rRNA adenine N(6)-methyltransferase family. In terms of assembly, part of the small subunit (SSU) processome, composed of more than 70 proteins and the RNA chaperone small nucleolar RNA (snoRNA) U3.

The protein localises to the nucleus. It is found in the nucleoplasm. It localises to the nucleolus. The catalysed reaction is adenosine(1779)/adenosine(1780) in 18S rRNA + 4 S-adenosyl-L-methionine = N(6)-dimethyladenosine(1779)/N(6)-dimethyladenosine(1780) in 18S rRNA + 4 S-adenosyl-L-homocysteine + 4 H(+). In terms of biological role, specifically dimethylates two adjacent adenosines in the loop of a conserved hairpin near the 3'-end of 18S rRNA in the 40S particle. Involved in the pre-rRNA processing steps leading to small-subunit rRNA production independently of its RNA-modifying catalytic activity. Part of the small subunit (SSU) processome, first precursor of the small eukaryotic ribosomal subunit. During the assembly of the SSU processome in the nucleolus, many ribosome biogenesis factors, an RNA chaperone and ribosomal proteins associate with the nascent pre-rRNA and work in concert to generate RNA folding, modifications, rearrangements and cleavage as well as targeted degradation of pre-ribosomal RNA by the RNA exosome. The polypeptide is Dimethyladenosine transferase (Homo sapiens (Human)).